Reading from the N-terminus, the 306-residue chain is Serine/threonine-protein phosphatase PP2A-1 catalytic subunit (306 aa).

4 residues coordinate Mn(2+): aspartate 54, histidine 56, aspartate 82, and asparagine 114. The Proton donor role is filled by histidine 115. Histidine 164 and histidine 238 together coordinate Mn(2+). Leucine 306 is modified (leucine methyl ester).

It belongs to the PPP phosphatase family. PP-2A subfamily. As to quaternary structure, PP2A consists of a common heterodimeric core enzyme, composed of a 36 kDa catalytic subunit (subunit C) and a 65 kDa constant regulatory subunit (subunit A), that associates with a variety of regulatory subunits such as subunits B (the R2/B/PR55/B55, R3/B''/PR72/PR130/PR59 and R5/B'/B56 families). Interacts with TAF12B. Interacts with SRK2E/OST1. Interacts with TAP46. The cofactor is Mn(2+). Post-translationally, reversibly methyl esterified on Leu-306 by leucine carboxyl methyltransferase 1 (LCMT1) and pectin methylesterase 1 (PME1). Carboxyl methylation influences the affinity of the catalytic subunit for the different regulatory subunits, thereby modulating the PP2A holoenzyme's substrate specificity, enzyme activity and cellular localization. Phosphorylation of either threonine (by autophosphorylation-activated protein kinase) or tyrosine results in inactivation of the phosphatase. Auto-dephosphorylation has been suggested as a mechanism for reactivation.

It is found in the cytoplasm. It carries out the reaction O-phospho-L-seryl-[protein] + H2O = L-seryl-[protein] + phosphate. The catalysed reaction is O-phospho-L-threonyl-[protein] + H2O = L-threonyl-[protein] + phosphate. The polypeptide is Serine/threonine-protein phosphatase PP2A-1 catalytic subunit (Arabidopsis thaliana (Mouse-ear cress)).